We begin with the raw amino-acid sequence, 595 residues long: Aspartate--tRNA ligase (595 aa).

Residue glutamate 173 participates in L-aspartate binding. An aspartate region spans residues 197 to 200 (QLFK). Arginine 219 lines the L-aspartate pocket. ATP is bound by residues 219 to 221 (RDE) and glutamine 228. Residue histidine 449 coordinates L-aspartate. ATP is bound at residue glutamate 483. Arginine 490 serves as a coordination point for L-aspartate. 535 to 538 (GLDR) lines the ATP pocket.

It belongs to the class-II aminoacyl-tRNA synthetase family. Type 1 subfamily. As to quaternary structure, homodimer.

It localises to the cytoplasm. The enzyme catalyses tRNA(Asp) + L-aspartate + ATP = L-aspartyl-tRNA(Asp) + AMP + diphosphate. Its function is as follows. Catalyzes the attachment of L-aspartate to tRNA(Asp) in a two-step reaction: L-aspartate is first activated by ATP to form Asp-AMP and then transferred to the acceptor end of tRNA(Asp). This Shewanella woodyi (strain ATCC 51908 / MS32) protein is Aspartate--tRNA ligase.